The sequence spans 154 residues: Cold shock domain-containing protein C2 (154 aa).

At Ser-19 the chain carries Phosphoserine. The interval 38-62 (GGGIAPRDLPSPLPTKRTRTYSATA) is disordered. The CSD domain occupies 69 to 136 (VFKGVCKQFS…KFQAVEVVLT (68 aa)).

The protein resides in the nucleus. It is found in the cytoplasm. RNA-binding factor which binds specifically to the very 3'-UTR ends of both histone H1 and H3.3 mRNAs, encompassing the polyadenylation signal. Might play a central role in the negative regulation of histone variant synthesis in the developing brain. In Mus musculus (Mouse), this protein is Cold shock domain-containing protein C2 (Csdc2).